The chain runs to 370 residues: Anhydro-N-acetylmuramic acid kinase (370 aa).

13 to 20 (GTSMDGVD) serves as a coordination point for ATP.

This sequence belongs to the anhydro-N-acetylmuramic acid kinase family.

The enzyme catalyses 1,6-anhydro-N-acetyl-beta-muramate + ATP + H2O = N-acetyl-D-muramate 6-phosphate + ADP + H(+). It participates in amino-sugar metabolism; 1,6-anhydro-N-acetylmuramate degradation. The protein operates within cell wall biogenesis; peptidoglycan recycling. Its function is as follows. Catalyzes the specific phosphorylation of 1,6-anhydro-N-acetylmuramic acid (anhMurNAc) with the simultaneous cleavage of the 1,6-anhydro ring, generating MurNAc-6-P. Is required for the utilization of anhMurNAc either imported from the medium or derived from its own cell wall murein, and thus plays a role in cell wall recycling. In Shewanella denitrificans (strain OS217 / ATCC BAA-1090 / DSM 15013), this protein is Anhydro-N-acetylmuramic acid kinase.